The following is a 326-amino-acid chain: UDP-3-O-acylglucosamine N-acyltransferase (326 aa).

The active-site Proton acceptor is the histidine 225.

This sequence belongs to the transferase hexapeptide repeat family. LpxD subfamily. In terms of assembly, homotrimer.

It catalyses the reaction a UDP-3-O-[(3R)-3-hydroxyacyl]-alpha-D-glucosamine + a (3R)-hydroxyacyl-[ACP] = a UDP-2-N,3-O-bis[(3R)-3-hydroxyacyl]-alpha-D-glucosamine + holo-[ACP] + H(+). It participates in bacterial outer membrane biogenesis; LPS lipid A biosynthesis. In terms of biological role, catalyzes the N-acylation of UDP-3-O-acylglucosamine using 3-hydroxyacyl-ACP as the acyl donor. Is involved in the biosynthesis of lipid A, a phosphorylated glycolipid that anchors the lipopolysaccharide to the outer membrane of the cell. In Verminephrobacter eiseniae (strain EF01-2), this protein is UDP-3-O-acylglucosamine N-acyltransferase.